A 914-amino-acid chain; its full sequence is Alanine--tRNA ligase (914 aa).

Residues His608, His612, Cys711, and His715 each contribute to the Zn(2+) site.

Belongs to the class-II aminoacyl-tRNA synthetase family. It depends on Zn(2+) as a cofactor.

It is found in the cytoplasm. The enzyme catalyses tRNA(Ala) + L-alanine + ATP = L-alanyl-tRNA(Ala) + AMP + diphosphate. Catalyzes the attachment of alanine to tRNA(Ala) in a two-step reaction: alanine is first activated by ATP to form Ala-AMP and then transferred to the acceptor end of tRNA(Ala). Also edits incorrectly charged Ser-tRNA(Ala) and Gly-tRNA(Ala) via its editing domain. This is Alanine--tRNA ligase from Methanoregula boonei (strain DSM 21154 / JCM 14090 / 6A8).